The chain runs to 187 residues: UPF0301 protein VC_0467 (187 aa).

This sequence belongs to the UPF0301 (AlgH) family.

This chain is UPF0301 protein VC_0467, found in Vibrio cholerae serotype O1 (strain ATCC 39315 / El Tor Inaba N16961).